Here is a 734-residue protein sequence, read N- to C-terminus: DNA replication licensing factor MCM5 (734 aa).

S2 carries the N-acetylserine modification. The 207-residue stretch at 331–537 (IYELISKSIA…RDVMLAKHVI (207 aa)) folds into the MCM domain. An ADP-binding site is contributed by R371. K392 and K396 each carry N6-acetyllysine. The Arginine finger motif lies at 512-515 (SRFD). S605 carries the phosphoserine modification.

It belongs to the MCM family. As to quaternary structure, component of the MCM2-7 complex. The complex forms a toroidal hexameric ring with the proposed subunit order MCM2-MCM6-MCM4-MCM7-MCM3-MCM5. Component of the CMG helicase complex, a hexameric ring of related MCM2-7 subunits stabilized by CDC45 and the tetrameric GINS complex. Interacts with ANKRD17. Interacts with MCMBP. Interacts with TONSL; the interaction is direct.

It localises to the nucleus. The protein localises to the chromosome. It is found in the cytoplasm. The protein resides in the cytosol. It catalyses the reaction ATP + H2O = ADP + phosphate + H(+). In terms of biological role, acts as a component of the MCM2-7 complex (MCM complex) which is the replicative helicase essential for 'once per cell cycle' DNA replication initiation and elongation in eukaryotic cells. Core component of CDC45-MCM-GINS (CMG) helicase, the molecular machine that unwinds template DNA during replication, and around which the replisome is built. The active ATPase sites in the MCM2-7 ring are formed through the interaction surfaces of two neighboring subunits such that a critical structure of a conserved arginine finger motif is provided in trans relative to the ATP-binding site of the Walker A box of the adjacent subunit. The six ATPase active sites, however, are likely to contribute differentially to the complex helicase activity. This Bos taurus (Bovine) protein is DNA replication licensing factor MCM5.